The primary structure comprises 511 residues: MEEYQIYLEIDGSCQENFLYPLSFQEYIYGLAYGHDLNRKVSILVENVDSDKKYSLLIVKRLITRMYQQNHLLLFANDSKKNLFLGYNKNFYSQIISDAFAVIVEIPFSRQFISSLEDAETIKSFNNLRSIHSIFSFFEDKFTYLNFVSDVRIPYPIHLEILVQTXXXXXXXXPFFHLLRLFLYEYSNWNTFITQKKRISTLSKSNPRFYIFLYNFYVCEHESIFLFLRKNSSHLRLNSFSLLFERIHFYAKLEHLVEVFAKDFSCTLAFFKDPMIHYVRYQGKSILASKNAPLLLNKWKYYLIYLWQCHFDVWSQEGTIRIKQLLSEHSFHFFWGGYISNVRLNFSVVRSQMLENSFPIEIGMKRLDTIVPIIPLIRSLAKAKFCNILGHPISKPVWTDSSDFDIIDRFLRICRNISHYYKGSSKKKGLYRIKYILRLSCIKTLARKHKSTVRAFLKRLDSEELLEEFLTEEEEILSLIFPRASSTLQSLYRDQIWYLDILFSHDLFNYE.

The protein belongs to the intron maturase 2 family. MatK subfamily.

It is found in the plastid. It localises to the chloroplast. Functionally, usually encoded in the trnK tRNA gene intron. Probably assists in splicing its own and other chloroplast group II introns. This is Maturase K from Adesmia lanata.